The following is a 355-amino-acid chain: Myosin-binding protein H-like (355 aa).

Composition is skewed to polar residues over residues Met-1–Gln-16 and Thr-31–Ser-41. The interval Met-1–Ser-41 is disordered. Ser-39 carries the phosphoserine modification. Residues Pro-46 to Asn-140 form the Ig-like C2-type 1 domain. Residues Pro-149 to Ala-244 form the Fibronectin type-III domain. An Ig-like C2-type 2 domain is found at Pro-262 to Asp-346. Cys-283 and Cys-334 form a disulfide bridge. Arg-322 is modified (omega-N-methylarginine).

This sequence belongs to the immunoglobulin superfamily. MyBP family. Expressed in the atria as well as in discrete puncta throughout the right ventricular wall and septum.

It is found in the cytoplasm. It localises to the myofibril. The protein resides in the sarcomere. Functionally, myosin-binding protein which plays a role in cardiac function. Seems to regulate conduction in the atria and ventricular conduction systems. The protein is Myosin-binding protein H-like of Mus musculus (Mouse).